A 62-amino-acid chain; its full sequence is Photosystem II reaction center protein Z (62 aa).

2 helical membrane passes run 8-28 and 41-61; these read TMFA…ITFA and FSGV…NSFI.

This sequence belongs to the PsbZ family. As to quaternary structure, PSII is composed of 1 copy each of membrane proteins PsbA, PsbB, PsbC, PsbD, PsbE, PsbF, PsbH, PsbI, PsbJ, PsbK, PsbL, PsbM, PsbT, PsbY, PsbZ, Psb30/Ycf12, at least 3 peripheral proteins of the oxygen-evolving complex and a large number of cofactors. It forms dimeric complexes.

Its subcellular location is the plastid. The protein localises to the chloroplast thylakoid membrane. In terms of biological role, may control the interaction of photosystem II (PSII) cores with the light-harvesting antenna, regulates electron flow through the 2 photosystem reaction centers. PSII is a light-driven water plastoquinone oxidoreductase, using light energy to abstract electrons from H(2)O, generating a proton gradient subsequently used for ATP formation. This chain is Photosystem II reaction center protein Z, found in Welwitschia mirabilis (Tree tumbo).